A 388-amino-acid chain; its full sequence is Oligogalacturonide lyase (388 aa).

The protein localises to the periplasm. It catalyses the reaction 4-(4-deoxy-alpha-D-galact-4-enuronosyl)-D-galacturonate = 2 5-dehydro-4-deoxy-D-glucuronate. It participates in glycan metabolism; pectin degradation; 2-dehydro-3-deoxy-D-gluconate from pectin: step 3/5. In terms of biological role, involved in degradation of pectin, which causes soft-rod disease in plants. This Pectobacterium atrosepticum (strain SCRI 1043 / ATCC BAA-672) (Erwinia carotovora subsp. atroseptica) protein is Oligogalacturonide lyase (ogl).